A 664-amino-acid chain; its full sequence is Kinesin-like protein KIF2B (664 aa).

A Phosphothreonine; by PLK1 modification is found at Thr-125. Positions 149–177 (CLREIEKLQKQREKRRRLQLEIRARRALD) form a coiled coil. At Ser-204 the chain carries Phosphoserine; by PLK1. In terms of domain architecture, Kinesin motor spans 213–543 (RICVCVRKRP…LRYANRVKEL (331 aa)). 303-310 (GQTGSGKT) is a binding site for ATP. Positions 583–607 (VQKEEEKESDELTSTKEPAASWSRS) are disordered. Residues 642 to 663 (VLTEIQKKLQLLRDDLQKKSQA) adopt a coiled-coil conformation.

The protein belongs to the TRAFAC class myosin-kinesin ATPase superfamily. Kinesin family. MCAK/KIF2 subfamily. In terms of processing, phosphorylation at Thr-125 by PLK1 is required for activity in the correction of kinetochore-microtubules attachment errors, while phosphorylation at Ser-204 also by PLK1 is required for the kinetochore localization and activity in prometaphase.

It is found in the cytoplasm. The protein resides in the cytoskeleton. It localises to the microtubule organizing center. Its subcellular location is the centrosome. The protein localises to the spindle. It is found in the chromosome. The protein resides in the centromere. It localises to the kinetochore. Its function is as follows. Plus end-directed microtubule-dependent motor required for spindle assembly and chromosome movement. Has microtubule depolymerization activity. Plays a role in chromosome congression. This Rattus norvegicus (Rat) protein is Kinesin-like protein KIF2B.